A 266-amino-acid chain; its full sequence is 3-methyl-2-oxobutanoate hydroxymethyltransferase (266 aa).

Residues D45 and D84 each contribute to the Mg(2+) site. 3-methyl-2-oxobutanoate-binding positions include 45–46, D84, and K112; that span reads DS. E114 is a Mg(2+) binding site. Catalysis depends on E181, which acts as the Proton acceptor.

Belongs to the PanB family. Homodecamer; pentamer of dimers. It depends on Mg(2+) as a cofactor.

Its subcellular location is the cytoplasm. It carries out the reaction 3-methyl-2-oxobutanoate + (6R)-5,10-methylene-5,6,7,8-tetrahydrofolate + H2O = 2-dehydropantoate + (6S)-5,6,7,8-tetrahydrofolate. It functions in the pathway cofactor biosynthesis; (R)-pantothenate biosynthesis; (R)-pantoate from 3-methyl-2-oxobutanoate: step 1/2. In terms of biological role, catalyzes the reversible reaction in which hydroxymethyl group from 5,10-methylenetetrahydrofolate is transferred onto alpha-ketoisovalerate to form ketopantoate. This Pseudomonas fluorescens (strain Pf0-1) protein is 3-methyl-2-oxobutanoate hydroxymethyltransferase.